The following is a 1198-amino-acid chain: Potassium/sodium hyperpolarization-activated cyclic nucleotide-gated channel 4 (1198 aa).

Residues 1–266 (MDKLPPSMRK…PYSDFRFYWD (266 aa)) lie on the Cytoplasmic side of the membrane. The interval 25–183 (IMDEEEDGEE…PASASCEQPS (159 aa)) is disordered. The segment covering 26–36 (MDEEEDGEEEG) has biased composition (acidic residues). Over residues 105-118 (SRGGGSGGAGGGSS) the composition is skewed to gly residues. Over residues 121–132 (HLHDSAEERRLI) the composition is skewed to basic and acidic residues. Ser-139 bears the Phosphoserine mark. Residues 164 to 174 (ASPPPQQPPQP) show a composition bias toward pro residues. The involved in subunit assembly stretch occupies residues 209 to 260 (GQSGFMQRQFGAMLQPGVNKFSLRMFGSQKAVEREQERVKSAGFWIIHPYSD). A helical membrane pass occupies residues 267–287 (LTMLLLMVGNLIIIPVGITFF). Residues 288-293 (KDENTT) are Extracellular-facing. The chain crosses the membrane as a helical span at residues 294–314 (PWIVFNVVSDTFFLIDLVLNF). The Cytoplasmic portion of the chain corresponds to 315-340 (RTGIVVEDNTEIILDPQRIKMKYLKS). A helical membrane pass occupies residues 341–361 (WFVVDFISSIPVDYIFLIVET). Residues 362–368 (RIDSEVY) lie on the Extracellular side of the membrane. The chain crosses the membrane as a helical; Voltage-sensor span at residues 369-389 (KTARALRIVRFTKILSLLRLL). Residues 390 to 420 (RLSRLIRYIHQWEEIFHMTYDLASAVVRIVN) lie on the Cytoplasmic side of the membrane. A helical transmembrane segment spans residues 421–441 (LIGMMLLLCHWDGCLQFLVPM). The Extracellular portion of the chain corresponds to 442-464 (LQDFPHDCWVSINGMVNNSWGKQ). Asn-458 carries an N-linked (GlcNAc...) asparagine glycan. Positions 465 to 486 (YSYALFKAMSHMLCIGYGRQAP) form an intramembrane region, pore-forming. Residues 487–496 (VGMSDVWLTM) are Extracellular-facing. The chain crosses the membrane as a helical span at residues 497-517 (LSMIVGATCYAMFIGHATALI). Topologically, residues 518–1198 (QSLDSSRRQY…PVRSKLPSNL (681 aa)) are cytoplasmic. 4 residues coordinate 3',5'-cyclic GMP: Tyr-559, Lys-562, Phe-564, and Glu-566. Residues Gly-659, Glu-660, Cys-662, Arg-669, Thr-670, Val-673, and Arg-710 each contribute to the 3',5'-cyclic AMP site. The disordered stretch occupies residues 804 to 1198 (AIFRPPPGPG…PVRSKLPSNL (395 aa)). 2 stretches are compositionally biased toward low complexity: residues 831 to 856 (SLIPSALGSASPASSPSQVDTPSSSS) and 866 to 880 (SAPPGLSPLLPSSSS). Residues 881-894 (SPPPGACSSPPAPT) show a composition bias toward pro residues. Low complexity-rich tracts occupy residues 895–905 (PSTSTAATTTG), 913–937 (LGGSLSSSDSPLLTPLQPGARSPQA), and 965–985 (RSPSSSPGQLGQPPGELSPGL). Residues 1027–1040 (GHSPGPPRTFPSAP) show a composition bias toward pro residues. Residues 1043–1054 (ASGSHGSLLLPP) are compositionally biased toward low complexity. Residues Ser-1103 and Ser-1106 each carry the phosphoserine modification. Gly residues predominate over residues 1120 to 1132 (AGGGSGSSGGLGP).

It belongs to the potassium channel HCN family. In terms of assembly, homotetramer. The potassium channel is composed of a homo- or heterotetrameric complex of pore-forming subunits. Interacts with PEX5L with a 4:4 HCN4:PEX5L stoichiometry; reduces the effects of cAMP on the voltage-dependence and rate of activation. Interacts with IRAG1; regulates HCN4 channel activity. Interacts with IRAG2; regulates HCN4 channel activity. S-palmitoylated. Highly expressed in pyramidal and granule layer of the hippocampus, in thalamus anterior nucleus, in the supraoptic nucleus in hypothalamus, in cerebellum, and in trapezoid nuclei and superior olivary complex in the auditory system. Detected in a subset of elongated cells in taste buds.

Its subcellular location is the cell membrane. It carries out the reaction K(+)(in) = K(+)(out). It catalyses the reaction Na(+)(in) = Na(+)(out). Its activity is regulated as follows. Activated by cAMP and at 100 times higher concentrationsand to a lesser extent by cGMP and cCMP. cAMP binding causes a conformation change that leads to the assembly of an active tetramer and channel opening. Binding of cAMP removes a tonic inhibition conferred by cyclic nucleotide-binding domain (CNBD) on channel opening. Cyclic dinucleotides can modulate HCN4 channel; cyclic dinucleotides acting as potent antagonists of cAMP. Inhibited by extracellular Cs(+) ions. Auxiliary subunits can also regulate HCN4 channel. IRAG1 causes a gain-of-function by shifting HCN4 activation to more depolarized membrane potentials in the absence of cAMP. In contrast, IRAG2 causes a loss-of-function by inhibiting cAMP-dependent potentiation of HCN4 activation. Hyperpolarization-activated ion channel that are permeable to Na(+) and K(+) ions with very slow activation and inactivation. Exhibits higher selectivity for K(+) over Na(+) ions. Contributes to the native pacemaker currents in heart (If) that regulate the rhythm of heart beat. Contributes to the native pacemaker currents in neurons (Ih). May mediate responses to sour stimuli. This is Potassium/sodium hyperpolarization-activated cyclic nucleotide-gated channel 4 (Hcn4) from Rattus norvegicus (Rat).